Here is a 456-residue protein sequence, read N- to C-terminus: Bifunctional protein GlmU (456 aa).

A pyrophosphorylase region spans residues 1–229 (MLNSAMSVVI…ISETDGVNNR (229 aa)). UDP-N-acetyl-alpha-D-glucosamine contacts are provided by residues 11–14 (LAAG), Lys25, Gln76, 81–82 (GT), 103–105 (YGD), Gly140, Glu154, Asn169, and Asn227. Asp105 is a binding site for Mg(2+). Asn227 contacts Mg(2+). Residues 230–250 (LQLSRLERIYQAEQAEKLLLS) are linker. Residues 251–456 (GVMLRDPARF…QGWQRPVKKK (206 aa)) form an N-acetyltransferase region. UDP-N-acetyl-alpha-D-glucosamine contacts are provided by Arg333 and Lys351. The Proton acceptor role is filled by His363. UDP-N-acetyl-alpha-D-glucosamine contacts are provided by Tyr366 and Asn377. Residues Ala380, 386-387 (NY), Ser405, Ala423, and Arg440 contribute to the acetyl-CoA site.

The protein in the N-terminal section; belongs to the N-acetylglucosamine-1-phosphate uridyltransferase family. It in the C-terminal section; belongs to the transferase hexapeptide repeat family. As to quaternary structure, homotrimer. Mg(2+) serves as cofactor.

The protein resides in the cytoplasm. The enzyme catalyses alpha-D-glucosamine 1-phosphate + acetyl-CoA = N-acetyl-alpha-D-glucosamine 1-phosphate + CoA + H(+). The catalysed reaction is N-acetyl-alpha-D-glucosamine 1-phosphate + UTP + H(+) = UDP-N-acetyl-alpha-D-glucosamine + diphosphate. The protein operates within nucleotide-sugar biosynthesis; UDP-N-acetyl-alpha-D-glucosamine biosynthesis; N-acetyl-alpha-D-glucosamine 1-phosphate from alpha-D-glucosamine 6-phosphate (route II): step 2/2. Its pathway is nucleotide-sugar biosynthesis; UDP-N-acetyl-alpha-D-glucosamine biosynthesis; UDP-N-acetyl-alpha-D-glucosamine from N-acetyl-alpha-D-glucosamine 1-phosphate: step 1/1. It functions in the pathway bacterial outer membrane biogenesis; LPS lipid A biosynthesis. Its function is as follows. Catalyzes the last two sequential reactions in the de novo biosynthetic pathway for UDP-N-acetylglucosamine (UDP-GlcNAc). The C-terminal domain catalyzes the transfer of acetyl group from acetyl coenzyme A to glucosamine-1-phosphate (GlcN-1-P) to produce N-acetylglucosamine-1-phosphate (GlcNAc-1-P), which is converted into UDP-GlcNAc by the transfer of uridine 5-monophosphate (from uridine 5-triphosphate), a reaction catalyzed by the N-terminal domain. In Salmonella typhi, this protein is Bifunctional protein GlmU.